Here is a 248-residue protein sequence, read N- to C-terminus: 2,3-bisphosphoglycerate-dependent phosphoglycerate mutase (248 aa).

Substrate-binding positions include 8 to 15 (RHGESVWN), 21 to 22 (TG), Arg60, 87 to 90 (ERHY), Lys98, and 114 to 115 (RR). Catalysis depends on His9, which acts as the Tele-phosphohistidine intermediate. The active-site Proton donor/acceptor is the Glu87. The segment at 116 to 135 (SYDTPPPPMEVSDPRHPSHD) is disordered. 183–184 (GN) contacts substrate.

Belongs to the phosphoglycerate mutase family. BPG-dependent PGAM subfamily. In terms of assembly, homodimer.

It catalyses the reaction (2R)-2-phosphoglycerate = (2R)-3-phosphoglycerate. It participates in carbohydrate degradation; glycolysis; pyruvate from D-glyceraldehyde 3-phosphate: step 3/5. Catalyzes the interconversion of 2-phosphoglycerate and 3-phosphoglycerate. This is 2,3-bisphosphoglycerate-dependent phosphoglycerate mutase from Bdellovibrio bacteriovorus (strain ATCC 15356 / DSM 50701 / NCIMB 9529 / HD100).